We begin with the raw amino-acid sequence, 235 residues long: Sugar fermentation stimulation protein homolog (235 aa).

It belongs to the SfsA family.

The polypeptide is Sugar fermentation stimulation protein homolog (Roseobacter denitrificans (strain ATCC 33942 / OCh 114) (Erythrobacter sp. (strain OCh 114))).